The chain runs to 476 residues: DnaJ protein P58IPK homolog A (476 aa).

The signal sequence occupies residues 1-28; it reads MVAMARWPWRVLLPLLLLHSSPVFFVFA. TPR repeat units follow at residues 36–69, 70–103, 116–150, 152–184, 185–218, 231–264, 269–302, and 304–336; these read PSTL…EPNH, SEAY…KPGS, AQNA…SPDC, KAKL…DEDN, LDAL…DPEH, LVKK…DPDH, VHLY…DGEL, and DALT…SPQD. In terms of domain architecture, J spans 357–423; that stretch reads DWYKILGISK…DKRVRYDRGE (67 aa).

In terms of assembly, interacts with BIP1.

Its subcellular location is the endoplasmic reticulum lumen. May play a role in protein folding in the endoplasmic reticulum. The protein is DnaJ protein P58IPK homolog A of Oryza sativa subsp. japonica (Rice).